We begin with the raw amino-acid sequence, 97 residues long: UPF0235 protein APP7_1431 (97 aa).

The protein belongs to the UPF0235 family.

The polypeptide is UPF0235 protein APP7_1431 (Actinobacillus pleuropneumoniae serotype 7 (strain AP76)).